A 612-amino-acid chain; its full sequence is Amyloid-beta precursor-like protein (612 aa).

The first 21 residues, 1–21 (MGPSVRPGFLVVVIGLQFVAA), serve as a signal peptide directing secretion. Topologically, residues 22–542 (SMEVNSRKFE…NLYANSHANS (521 aa)) are extracellular. The interval 28–122 (RKFEPMVAFI…PFRCLVGPFQ (95 aa)) is GFLD subdomain. The E1 domain maps to 28-189 (RKFEPMVAFI…SGVEFVCCPK (162 aa)). 6 disulfides stabilise this stretch: C38–C60, C71–C116, C96–C103, C132–C187, C143–C173, and C157–C186. N-linked (GlcNAc...) asparagine glycans are attached at residues N99, N108, and N150. A cuBD subdomain region spans residues 130-189 (EHCIFDHYHDPRVCNEFDQCNETAMSKCSARGMTTQSFAMLWPCQEPGHFSGVEFVCCPK). The E2 domain occupies 223–419 (GDSKYMSKYA…KQVRPNIDKF (197 aa)). Disordered stretches follow at residues 251-276 (ERDTKMMKDWKAARDSVREKKKTDPK) and 437-490 (QEPT…FDSE). 2 stretches are compositionally biased toward basic and acidic residues: residues 439–453 (PTPKEAPVETQKAED) and 470–483 (KPTEARPEQQEDIK). The helical transmembrane segment at 543–563 (VLGIAIGGVVVFIIIVVAVVM) threads the bilayer. The Cytoplasmic segment spans residues 564–612 (LKRRTQRQRVTHGFVEVDPAASPEERHVANMQMSGYENPTYKYFEMQNQ). Residues 598–612 (GYENPTYKYFEMQNQ) form a required for the interaction with kinesin heavy chain and for anterograde transport in axons region. The YENPXY motif signature appears at 599 to 604 (YENPTY).

This sequence belongs to the APP family. Interacts (via cytoplasmic domain) with kinesin heavy chain. Expressed in the cervicothoracic ganglion (stellate ganglion) (at protein level).

The protein resides in the cell membrane. Its subcellular location is the cell projection. It is found in the axon. In terms of biological role, acts as a kinesin I membrane receptor, thereby playing a role in axonal anterograde transport of cargo towards synapses in axons. This is Amyloid-beta precursor-like protein from Doryteuthis pealeii (Longfin inshore squid).